A 611-amino-acid chain; its full sequence is Class E vacuolar protein-sorting machinery protein hse1 (611 aa).

The VHS domain maps to 16-145 (ATDENLTSEN…KLKTQNPNLQ (130 aa)). 2 disordered regions span residues 140-163 (QNPNLQPPSKPGKREITDADRQKE) and 182-211 (APAPQAEASSSAAPVNQTQAPAATSQAVPS). Over residues 151 to 163 (GKREITDADRQKE) the composition is skewed to basic and acidic residues. The UIM domain maps to 162–181 (KEEEELQMALALSIREKATI). Residues 182–195 (APAPQAEASSSAAP) show a composition bias toward low complexity. A compositionally biased stretch (polar residues) spans 196–211 (VNQTQAPAATSQAVPS). Positions 216 to 275 (ATVSRVRALFDFQPSEPGELQFRKGDVIAVLESVYKDWWKGSLRGQTGIFPLNYVEKLPD) constitute an SH3 domain. Residues 373-611 (PAQSQYGRPA…DVSNPASFYR (239 aa)) are disordered. Low complexity-rich tracts occupy residues 388–397 (YPGAAPVGYP) and 452–472 (APYQQPQPQQQRQPSSESYQP). Over residues 480–492 (TYENPQELGTSVY) the composition is skewed to polar residues. Over residues 509 to 534 (AVQVPAAVQQHFQQQQQQPQQQSQQP) the composition is skewed to low complexity. Residues 558–575 (PPYPSHQPPPMHQPPPVP) show a composition bias toward pro residues. Residues 596–611 (YNPSQTDVSNPASFYR) are compositionally biased toward polar residues.

Belongs to the STAM family. Component of the ESCRT-0 complex composed of HSE1 and VPS27.

The protein resides in the endosome membrane. Component of the ESCRT-0 complex which is the sorting receptor for ubiquitinated cargo proteins at the multivesicular body (MVB). In Aspergillus niger (strain ATCC MYA-4892 / CBS 513.88 / FGSC A1513), this protein is Class E vacuolar protein-sorting machinery protein hse1 (hse1).